Here is a 208-residue protein sequence, read N- to C-terminus: Small ribosomal subunit protein uS4 (208 aa).

Positions 95–157 (RRIDNIVYRA…DSLKKLIRSN (63 aa)) constitute an S4 RNA-binding domain.

This sequence belongs to the universal ribosomal protein uS4 family. Part of the 30S ribosomal subunit. Contacts protein S5. The interaction surface between S4 and S5 is involved in control of translational fidelity.

Its function is as follows. One of the primary rRNA binding proteins, it binds directly to 16S rRNA where it nucleates assembly of the body of the 30S subunit. With S5 and S12 plays an important role in translational accuracy. This is Small ribosomal subunit protein uS4 from Borrelia garinii subsp. bavariensis (strain ATCC BAA-2496 / DSM 23469 / PBi) (Borreliella bavariensis).